Reading from the N-terminus, the 159-residue chain is Small ribosomal subunit protein uS7 (159 aa).

It belongs to the universal ribosomal protein uS7 family. As to quaternary structure, part of the 30S ribosomal subunit. Contacts proteins S9 and S11.

In terms of biological role, one of the primary rRNA binding proteins, it binds directly to 16S rRNA where it nucleates assembly of the head domain of the 30S subunit. Is located at the subunit interface close to the decoding center, probably blocks exit of the E-site tRNA. The sequence is that of Small ribosomal subunit protein uS7 from Sulfurihydrogenibium sp. (strain YO3AOP1).